A 569-amino-acid polypeptide reads, in one-letter code: Apical membrane antigen 1 (569 aa).

Residues 1–48 (MICSIMGGLRSLRAARPYSHQSNTETKHMGLVGVASLLVLVADCTIFA) form the signal peptide. The propeptide at 49–66 (SGLSSSTRSRESQTLSAS) is removed in mature form; required for microneme targeting of the proprotein. Residues 49–483 (SGLSSSTRSR…DEQNECGSNT (435 aa)) lie on the Extracellular side of the membrane. Residues 67 to 287 (TSGNPFQANV…NPDAFISKCP (221 aa)) are DI. N86 is a glycosylation site (N-linked (GlcNAc...) asparagine). Disulfide bonds link C117-C286, C194-C226, C242-C255, C304-C393, C324-C384, C435-C459, C447-C471, and C452-C479. The segment at 288–415 (NQALRGYRFG…AGSLSEETPN (128 aa)) is DII. Residues 416–487 (FIIPSNPSVT…ECGSNTALIA (72 aa)) are DIII. A helical transmembrane segment spans residues 484–504 (ALIAGLAVGGVLLLALLGGGC). At 505–569 (YFAKRLDRNK…ETHVMVEGDY (65 aa)) the chain is on the cytoplasmic side. Positions 518 to 530 (AAHHEHEFQSDRG) are enriched in basic and acidic residues. The interval 518–548 (AAHHEHEFQSDRGARKKRPSDLMQEAEPSFW) is disordered.

Belongs to the apicomplexan parasites AMA1 family. In terms of assembly, component of the moving junction (MJ) complex, composed of AMA1, a transmembrane protein on the parasite surface, and a complex of the rhoptry neck proteins RON2, RON4, RON5 and RON8 localized to the cytoplasmic face of the host plasma membrane. Interacts (via ectodomain) with RON2 (via C-terminus); RON2 serves as the receptor for AMA1 on the host plasma membrane. AMA1 and the RON proteins are initially in distinct compartments within the parasite, namely the micronemes and the rhoptries, and interaction happens only upon initiation of invasion when the micronemes and rhoptries discharge. Post-translationally, proteolytically cleaved during invasion within its transmembrane domain, releasing a soluble form from the tachyzoite surface. The cytosolic tail generated by ROM4 cleavage during invasion may trigger parasite replication within the parasitophorous vacuole.

It is found in the cell membrane. The protein resides in the secreted. Essential microneme protein that plays an important role in host cell invasion. Part of the moving junction (MJ) complex, a ringlike structure formed between the plasma membranes of the apical tip of the parasite and the target host cell. During invasion, the MJ migrates from the anterior to the posterior of the parasite, leading to internalization of the parasite into a parasitophorous vacuole (PV). This chain is Apical membrane antigen 1 (AMA1), found in Toxoplasma gondii (strain ATCC 50861 / VEG).